A 530-amino-acid polypeptide reads, in one-letter code: UDP-glucuronosyltransferase 2B14 (530 aa).

Positions 1–24 (MSVKHVSVLLLLLQLSCCFRTGSC) are cleaved as a signal peptide. N-linked (GlcNAc...) asparagine glycosylation is found at asparagine 134 and asparagine 316. A helical transmembrane segment spans residues 494–510 (VVGFLVSCAAFLIFLVI).

It belongs to the UDP-glycosyltransferase family.

It is found in the microsome membrane. It localises to the endoplasmic reticulum membrane. The catalysed reaction is glucuronate acceptor + UDP-alpha-D-glucuronate = acceptor beta-D-glucuronoside + UDP + H(+). UDPGT is of major importance in the conjugation and subsequent elimination of potentially toxic xenobiotics and endogenous compounds. This Oryctolagus cuniculus (Rabbit) protein is UDP-glucuronosyltransferase 2B14 (UGT2B14).